Here is a 250-residue protein sequence, read N- to C-terminus: MSHNFHVIIPARYHSSRFPGKLLQEINGITVIERVYRQALLAEPKSVIIATDHDEIADRAIQFGAEVVITSHTHQTGTDRIAEVIAKGSFAPDDVIVNVQGDEPFIRPKLIQQVACSLTKTKAPVSTLCWPISSLEILNNPNVVKVVCTRDNHALYFSRSAIPFHRDDKNAYSNTFRHIGLYAYRAAFLLEFVSWPPCTLEQIECLEQLRILWSGFSIRVDEACEEPLQDINTKEDLILAQQYFLDTFNV.

It belongs to the KdsB family.

The protein resides in the cytoplasm. It catalyses the reaction 3-deoxy-alpha-D-manno-oct-2-ulosonate + CTP = CMP-3-deoxy-beta-D-manno-octulosonate + diphosphate. The protein operates within nucleotide-sugar biosynthesis; CMP-3-deoxy-D-manno-octulosonate biosynthesis; CMP-3-deoxy-D-manno-octulosonate from 3-deoxy-D-manno-octulosonate and CTP: step 1/1. It participates in bacterial outer membrane biogenesis; lipopolysaccharide biosynthesis. Its function is as follows. Activates KDO (a required 8-carbon sugar) for incorporation into bacterial lipopolysaccharide in Gram-negative bacteria. The polypeptide is 3-deoxy-manno-octulosonate cytidylyltransferase (Legionella pneumophila subsp. pneumophila (strain Philadelphia 1 / ATCC 33152 / DSM 7513)).